A 93-amino-acid chain; its full sequence is Putative regulatory protein Fnod_1678 (93 aa).

This sequence belongs to the RemA family.

In Fervidobacterium nodosum (strain ATCC 35602 / DSM 5306 / Rt17-B1), this protein is Putative regulatory protein Fnod_1678.